Reading from the N-terminus, the 237-residue chain is 2,3-bisphosphoglycerate-dependent phosphoglycerate mutase (237 aa).

Substrate contacts are provided by residues 8-15, 21-22, arginine 60, 87-90, lysine 98, 114-115, and 180-181; these read RHGQSAWN, TG, ERHY, RR, and GN. The active-site Tele-phosphohistidine intermediate is the histidine 9. Glutamate 87 functions as the Proton donor/acceptor in the catalytic mechanism.

The protein belongs to the phosphoglycerate mutase family. BPG-dependent PGAM subfamily. Homodimer.

The enzyme catalyses (2R)-2-phosphoglycerate = (2R)-3-phosphoglycerate. The protein operates within carbohydrate degradation; glycolysis; pyruvate from D-glyceraldehyde 3-phosphate: step 3/5. Functionally, catalyzes the interconversion of 2-phosphoglycerate and 3-phosphoglycerate. The protein is 2,3-bisphosphoglycerate-dependent phosphoglycerate mutase of Hyphomonas neptunium (strain ATCC 15444).